A 395-amino-acid chain; its full sequence is ATP phosphoribosyltransferase regulatory subunit (395 aa).

Belongs to the class-II aminoacyl-tRNA synthetase family. HisZ subfamily. Heteromultimer composed of HisG and HisZ subunits.

The protein localises to the cytoplasm. Its pathway is amino-acid biosynthesis; L-histidine biosynthesis; L-histidine from 5-phospho-alpha-D-ribose 1-diphosphate: step 1/9. In terms of biological role, required for the first step of histidine biosynthesis. May allow the feedback regulation of ATP phosphoribosyltransferase activity by histidine. This Stutzerimonas stutzeri (Pseudomonas stutzeri) protein is ATP phosphoribosyltransferase regulatory subunit.